We begin with the raw amino-acid sequence, 511 residues long: GMP synthase [glutamine-hydrolyzing] (511 aa).

The 191-residue stretch at 5–195 (DILVLDFGSQ…AKYACNCESV (191 aa)) folds into the Glutamine amidotransferase type-1 domain. Cysteine 82 (nucleophile) is an active-site residue. Catalysis depends on residues histidine 169 and glutamate 171. The GMPS ATP-PPase domain maps to 196 to 386 (WNMGSFAKTQ…LGLSKEVVYR (191 aa)). Residue 223-229 (SGGVDSS) coordinates ATP.

Homodimer.

It carries out the reaction XMP + L-glutamine + ATP + H2O = GMP + L-glutamate + AMP + diphosphate + 2 H(+). It functions in the pathway purine metabolism; GMP biosynthesis; GMP from XMP (L-Gln route): step 1/1. Its function is as follows. Catalyzes the synthesis of GMP from XMP. The sequence is that of GMP synthase [glutamine-hydrolyzing] from Campylobacter jejuni (strain RM1221).